Reading from the N-terminus, the 432-residue chain is Guanine/hypoxanthine permease PbuO (432 aa).

10 helical membrane passes run 15 to 35, 51 to 71, 92 to 112, 133 to 153, 174 to 194, 196 to 216, 234 to 254, 340 to 360, 379 to 399, and 412 to 432; these read IIAG…NPVI, IIAS…PIAI, GITY…FIIL, ITTG…GIVA, LVGL…ALFI, MAAT…KGFM, FGDV…LVTI, ALSG…SLMM, LVIL…LGFI, and REIH…LFIL.

This sequence belongs to the nucleobase:cation symporter-2 (NCS2) (TC 2.A.40) family. Azg-like subfamily.

The protein localises to the cell membrane. In terms of biological role, involved in the uptake of the purine bases hypoxanthine and guanine. May work at purine concentrations higher than 100 uM. The polypeptide is Guanine/hypoxanthine permease PbuO (pbuO) (Bacillus subtilis (strain 168)).